A 980-amino-acid polypeptide reads, in one-letter code: Envelope glycoprotein B (980 aa).

Residues 1–14 are compositionally biased toward polar residues; it reads MSSGCRSVGGSTWG. Disordered stretches follow at residues 1 to 20 and 88 to 118; these read MSSGCRSVGGSTWGNWRGDG and TTPSPPTSTPTSMSTHSHGTVDPTLLPTETP. Residues 1 to 86 form the signal peptide; that stretch reads MSSGCRSVGG…LFGSCVVRAV (86 aa). Over 87-849 the chain is Virion surface; sequence PTTPSPPTST…SGIASFLNNP (763 aa). Residues 96 to 118 show a composition bias toward low complexity; it reads TPTSMSTHSHGTVDPTLLPTETP. Intrachain disulfides connect Cys140–Cys647, Cys157–Cys603, Cys231–Cys296, Cys389–Cys437, and Cys668–Cys708. N-linked (GlcNAc...) asparagine; by host glycosylation occurs at Asn165. The segment at 197–203 is involved in fusion and/or binding to host membrane; that stretch reads VWKGYSH. Asn275 carries N-linked (GlcNAc...) asparagine; by host glycosylation. Positions 282 to 290 are involved in fusion and/or binding to host membrane; it reads GWMPWRHYT. N-linked (GlcNAc...) asparagine; by host glycosylation is found at Asn380, Asn423, Asn497, Asn514, Asn515, and Asn560. Residues 505-516 are compositionally biased toward low complexity; the sequence is LLNPNANNNNNT. A disordered region spans residues 505-535; it reads LLNPNANNNNNTTRRRRSLLSVPEPQPTQDG. Residues Asn727 and Asn749 are each glycosylated (N-linked (GlcNAc...) asparagine; by host). Hydrophobic membrane proximal region regions lie at residues 794 to 847 and 823 to 843; these read IDSV…SFLN and AVGTLVLAAAGAVVSTVSGIA. Residues 850-870 traverse the membrane as a helical segment; it reads FGGLAIGLLVIAGLVAAFFAY. Topologically, residues 871–980 are intravirion; that stretch reads RYVMQIRSNP…NDTMENEKMV (110 aa). The short motif at 925-928 is the Golgi targeting element; it reads YMSM. The short motif at 965 to 968 is the Internalization motif element; that stretch reads YTRL.

It belongs to the herpesviridae glycoprotein B family. In terms of assembly, homotrimer; disulfide-linked. Binds to heparan sulfate proteoglycans. Interacts with gH/gL heterodimer. Post-translationally, a proteolytic cleavage by host furin generates two subunits that remain linked by disulfide bonds.

The protein localises to the virion membrane. It localises to the host cell membrane. The protein resides in the host endosome membrane. Its subcellular location is the host Golgi apparatus membrane. Functionally, envelope glycoprotein that forms spikes at the surface of virion envelope. Essential for the initial attachment to heparan sulfate moieties of the host cell surface proteoglycans. Involved in fusion of viral and cellular membranes leading to virus entry into the host cell. Following initial binding to its host receptors, membrane fusion is mediated by the fusion machinery composed at least of gB and the heterodimer gH/gL. May be involved in the fusion between the virion envelope and the outer nuclear membrane during virion egress. The protein is Envelope glycoprotein B of Equine herpesvirus 1 (strain AB1) (EHV-1).